The primary structure comprises 508 residues: tRNA (guanine(37)-N(1))-methyltransferase (508 aa).

The N-terminal 53 residues, 1–53 (MKFNFWKGLWKPKSLTPTLSHRLYRRMYTPQPPLNREMTVLDRSKFTVSLNLA), are a transit peptide targeting the mitochondrion. His-253 is a binding site for S-adenosyl-L-methionine. Basic and acidic residues predominate over residues 267–284 (RERKQQERAKRENHEKST). The interval 267–291 (RERKQQERAKRENHEKSTETAVEPD) is disordered. Residues 323–324 (DL), 351–352 (DG), and Asn-402 each bind S-adenosyl-L-methionine.

The protein belongs to the class I-like SAM-binding methyltransferase superfamily. TRM5/TYW2 family. As to quaternary structure, monomer.

It localises to the mitochondrion matrix. The protein resides in the nucleus. Its subcellular location is the cytoplasm. It carries out the reaction guanosine(37) in tRNA + S-adenosyl-L-methionine = N(1)-methylguanosine(37) in tRNA + S-adenosyl-L-homocysteine + H(+). In terms of biological role, specifically methylates the N1 position of guanosine-37 in various cytoplasmic and mitochondrial tRNAs. Methylation is not dependent on the nature of the nucleoside 5' of the target nucleoside. This is the first step in the biosynthesis of wybutosine (yW), a modified base adjacent to the anticodon of tRNAs and required for accurate decoding. The chain is tRNA (guanine(37)-N(1))-methyltransferase from Yarrowia lipolytica (strain CLIB 122 / E 150) (Yeast).